An 854-amino-acid polypeptide reads, in one-letter code: Espin (854 aa).

9 ANK repeats span residues 1-31, 35-64, 69-99, 103-133, 137-167, 171-201, 205-235, 239-268, and 271-300; these read MALEQALQAARQGELDVLRSLHAAGLLGPSL, LDALPVHHAARAGKLHCLRFLVEEAALPAA, NGATPAHDASATGHLACLQWLLSQGGCRVQD, SGATVLHLAARFGHPEVVNWLLHHGGGDPTA, MGALPIHYAAAKGDFPSLRLLVEHYPEGVNA, NGATPLYLACQEGHLEVTQYLVQECGADPHA, DGMTPLHAAAQMGHSPVIVWLVSCTDVSLSE, DGATAMHFAASRGHTKVLSWLLLHGGEISA, and WGGTPLHDAAENGELECCQILVVNGAELDV. Ser338 and Ser342 each carry phosphoserine. The span at 338 to 349 shows a compositional bias: basic and acidic residues; that stretch reads SRDPSAELEAKQ. Disordered regions lie at residues 338–400, 415–474, 487–713, 765–788, and 800–832; these read SRDP…CGLS, NPEL…MQTK, KELS…AGFQ, KMQEEEEQRRKEEEEEARLASMPA, and EEREQKRKEEERQKQEELRREKEQSEKLRTLGY. Over residues 352–377 the composition is skewed to polar residues; the sequence is SGMSSPNTTVSVQPLNFDLSSPTSTL. A compositionally biased stretch (low complexity) spans 378–389; it reads SNYDSCSSSHSS. The span at 428–463 shows a compositional bias: pro residues; it reads PTPPPPPPSFPPPPPPPGTQLPPPPPGYPAPKPPVG. Positions 487–505 are enriched in basic and acidic residues; it reads KELSSCDGHDGLRRQDSSR. A Phosphoserine modification is found at Ser515. Pro residues predominate over residues 595 to 620; it reads LPPPPPPPPPPLPEAASSPPPAPPLP. A compositionally biased stretch (low complexity) spans 633 to 642; it reads SSSSTGSTKS. Polar residues-rich tracts occupy residues 643–652 and 667–678; these read FNMMSPTGDN and PTPQSKGLTTVF. Ser647 carries the phosphoserine modification. The WH2 domain maps to 651–668; sequence DNSELLAEIKAGKSLKPT. 2 positions are modified to phosphoserine: Ser690 and Ser696. Residues 692–703 show a composition bias toward low complexity; it reads LPSVSPALSPVR. Residues 756–830 adopt a coiled-coil conformation; sequence QVMVRKMQLK…KEQSEKLRTL (75 aa).

Monomer. Binds F-actin in a Ca(2+)-resistant fashion. Interacts (via N-terminus) with BAIAP2 (via SH3-domain). Interacts with PFN2. Interacts with MYO3A (via C-terminus). Interacts with MYO3B (via C-terminus).

The protein resides in the cytoplasm. It is found in the cytoskeleton. It localises to the cell projection. The protein localises to the stereocilium. Its subcellular location is the microvillus. Multifunctional actin-bundling protein. Plays a major role in regulating the organization, dimension, dynamics and signaling capacities of the actin filament-rich microvilli in the mechanosensory and chemosensory cells. Required for the assembly and stabilization of the stereociliary parallel actin bundles. Plays a crucial role in the formation and maintenance of inner ear hair cell stereocilia. Involved in the elongation of actin in stereocilia. In extrastriolar hair cells, required for targeting MYO3B to stereocilia tips, and for regulation of stereocilia diameter and staircase formation. The polypeptide is Espin (ESPN) (Homo sapiens (Human)).